The chain runs to 206 residues: Protein GrpE (206 aa).

Positions 1–10 (MTDPDLHQND) are enriched in basic and acidic residues. The disordered stretch occupies residues 1–38 (MTDPDLHQNDPENPAQASEPVVSKPYIMPDDPETGSAE).

This sequence belongs to the GrpE family. In terms of assembly, homodimer.

The protein localises to the cytoplasm. Functionally, participates actively in the response to hyperosmotic and heat shock by preventing the aggregation of stress-denatured proteins, in association with DnaK and GrpE. It is the nucleotide exchange factor for DnaK and may function as a thermosensor. Unfolded proteins bind initially to DnaJ; upon interaction with the DnaJ-bound protein, DnaK hydrolyzes its bound ATP, resulting in the formation of a stable complex. GrpE releases ADP from DnaK; ATP binding to DnaK triggers the release of the substrate protein, thus completing the reaction cycle. Several rounds of ATP-dependent interactions between DnaJ, DnaK and GrpE are required for fully efficient folding. The sequence is that of Protein GrpE from Bradyrhizobium sp. (strain ORS 278).